The sequence spans 309 residues: General transcription factor IIH subunit 3 (309 aa).

Residues 269–286 (CSVCLSIFCNFSPICTTC) form a C4-type zinc finger.

This sequence belongs to the TFB4 family. Part of a TFIID-containing RNA polymerase II pre-initiation complex that is composed of TBP and at least GTF2A1, GTF2A2, GTF2E1, GTF2E2, GTF2F1, GTF2H2, GTF2H3, GTF2H4, GTF2H5, GTF2B, TCEA1, ERCC2, ERCC3, TAF1, TAF2, TAF3, TAF4, TAF5, TAF6, TAF7, TAF8, TAF9, TAF10, TAF11, TAF12 and TAF13. Component of the 7-subunit TFIIH core complex composed of XPB/ERCC3, XPD/ERCC2, GTF2H1, GTF2H2, GTF2H3, GTF2H4 and GTF2H5, which is active in NER. The core complex associates with the 3-subunit CDK-activating kinase (CAK) module composed of CCNH/cyclin H, CDK7 and MNAT1 to form the 10-subunit holoenzyme (holo-TFIIH) active in transcription. Interacts with RARA; the interaction requires prior phosphorylation of RARA on 'Ser-369' which then enhances interaction of RARA with CDK7.

It localises to the nucleus. Its function is as follows. Component of the general transcription and DNA repair factor IIH (TFIIH) core complex, which is involved in general and transcription-coupled nucleotide excision repair (NER) of damaged DNA and, when complexed to CAK, in RNA transcription by RNA polymerase II. In NER, TFIIH acts by opening DNA around the lesion to allow the excision of the damaged oligonucleotide and its replacement by a new DNA fragment. In transcription, TFIIH has an essential role in transcription initiation. When the pre-initiation complex (PIC) has been established, TFIIH is required for promoter opening and promoter escape. Phosphorylation of the C-terminal tail (CTD) of the largest subunit of RNA polymerase II by the kinase module CAK controls the initiation of transcription. The chain is General transcription factor IIH subunit 3 (GTF2H3) from Bos taurus (Bovine).